Consider the following 311-residue polypeptide: Hevamine-A (311 aa).

An N-terminal signal peptide occupies residues 1–26; that stretch reads MAKRTQAILLLLLAISLIMSSSHVDG. The region spanning 27–302 is the GH18 domain; that stretch reads GGIAIYWGQN…SSILDSVLFL (276 aa). Cystine bridges form between cysteine 46–cysteine 93 and cysteine 76–cysteine 83. Glutamate 153 functions as the Proton donor in the catalytic mechanism. Cysteine 185 and cysteine 214 are joined by a disulfide. The propeptide at 300 to 311 is removed in mature form; it reads LFLHSEECMTVL.

The protein belongs to the glycosyl hydrolase 18 family. Chitinase class II subfamily.

It is found in the vacuole. It catalyses the reaction Random endo-hydrolysis of N-acetyl-beta-D-glucosaminide (1-&gt;4)-beta-linkages in chitin and chitodextrins.. The catalysed reaction is Hydrolysis of (1-&gt;4)-beta-linkages between N-acetylmuramic acid and N-acetyl-D-glucosamine residues in a peptidoglycan and between N-acetyl-D-glucosamine residues in chitodextrins.. Its function is as follows. Bifunctional enzyme with lysozyme / chitinase activity. May have a role in plugging the latex vessel and cessation of latex flow. In Hevea brasiliensis (Para rubber tree), this protein is Hevamine-A.